The sequence spans 32 residues: C-reactive protein (32 aa).

Residues valine 2 to leucine 32 enclose the Pentraxin (PTX) domain.

The protein belongs to the pentraxin family. As to quaternary structure, homopentamer. Pentraxin (or pentaxin) have a discoid arrangement of 5 non-covalently bound subunits. Glycosylated.

The protein resides in the secreted. In terms of biological role, displays several functions associated with host defense: it promotes agglutination, bacterial capsular swelling, phagocytosis, and complement fixation through its calcium-dependent binding to phosphorylcholine. In Pleuronectes platessa (European plaice), this protein is C-reactive protein.